Here is a 245-residue protein sequence, read N- to C-terminus: Malonyl-[acyl-carrier protein] O-methyltransferase (245 aa).

Belongs to the methyltransferase superfamily.

The catalysed reaction is malonyl-[ACP] + S-adenosyl-L-methionine = malonyl-[ACP] methyl ester + S-adenosyl-L-homocysteine. It functions in the pathway cofactor biosynthesis; biotin biosynthesis. In terms of biological role, converts the free carboxyl group of a malonyl-thioester to its methyl ester by transfer of a methyl group from S-adenosyl-L-methionine (SAM). It allows to synthesize pimeloyl-ACP via the fatty acid synthetic pathway. The sequence is that of Malonyl-[acyl-carrier protein] O-methyltransferase from Calditerrivibrio nitroreducens (strain DSM 19672 / NBRC 101217 / Yu37-1).